The chain runs to 279 residues: Phosphate import ATP-binding protein PstB 1 (279 aa).

Residues 26-274 form the ABC transporter domain; it reads VMDCKLDKIF…PREQLTSDYI (249 aa). 59–66 is an ATP binding site; the sequence is GPSGCGKS.

Belongs to the ABC transporter superfamily. Phosphate importer (TC 3.A.1.7) family. As to quaternary structure, the complex is composed of two ATP-binding proteins (PstB), two transmembrane proteins (PstC and PstA) and a solute-binding protein (PstS).

The protein resides in the cell inner membrane. It carries out the reaction phosphate(out) + ATP + H2O = ADP + 2 phosphate(in) + H(+). Functionally, part of the ABC transporter complex PstSACB involved in phosphate import. Responsible for energy coupling to the transport system. The sequence is that of Phosphate import ATP-binding protein PstB 1 from Pseudomonas putida (strain ATCC 47054 / DSM 6125 / CFBP 8728 / NCIMB 11950 / KT2440).